The sequence spans 484 residues: Xylulose kinase (484 aa).

A substrate-binding site is contributed by 77-78; sequence MH. The active-site Proton acceptor is the Asp-233.

It belongs to the FGGY kinase family. Homodimer.

The enzyme catalyses D-xylulose + ATP = D-xylulose 5-phosphate + ADP + H(+). It carries out the reaction 1-deoxy-D-xylulose + ATP = 1-deoxy-D-xylulose 5-phosphate + ADP + H(+). Its activity is regulated as follows. Sugar binding is accompanied by a dramatic hinge-bending movement that enhances interactions with Mg-ATP. In terms of biological role, catalyzes the phosphorylation of D-xylulose to D-xylulose 5-phosphate. Also catalyzes the phosphorylation of 1-deoxy-D-xylulose to 1-deoxy-D-xylulose 5-phosphate, with lower efficiency. Can also use D-ribulose, xylitol and D-arabitol, but D-xylulose is preferred over the other substrates. Has a weak substrate-independent Mg-ATP-hydrolyzing activity. This chain is Xylulose kinase, found in Escherichia coli (strain K12).